Here is a 244-residue protein sequence, read N- to C-terminus: Transcriptional regulatory protein AruR (244 aa).

One can recognise a Response regulatory domain in the interval 6 to 124; that stretch reads RVLVVDDDPV…ELVSRAKNLI (119 aa). 4-aspartylphosphate is present on Asp-60. The segment at residues 139-239 is a DNA-binding region (ompR/PhoB-type); sequence QALRQFGDWL…IHGAGYLFTA (101 aa).

Post-translationally, phosphorylated by AruS.

Its subcellular location is the cytoplasm. It functions in the pathway amino-acid degradation; L-arginine degradation [regulation]. Its function is as follows. Member of the two-component regulatory system AruS/AruR, which is involved in the regulation of the arginine transaminase (ATA) pathway in response to exogeneous L-arginine. Regulates transcription of aruH and aruI. The protein is Transcriptional regulatory protein AruR (aruR) of Pseudomonas aeruginosa (strain ATCC 15692 / DSM 22644 / CIP 104116 / JCM 14847 / LMG 12228 / 1C / PRS 101 / PAO1).